Reading from the N-terminus, the 236-residue chain is Putative glutamine amidotransferase-like protein YvdE (236 aa).

Positions 17 to 236 (SPFWWNKVSY…IFEIFANGTI (220 aa)) constitute a Glutamine amidotransferase type-1 domain.

This is Putative glutamine amidotransferase-like protein YvdE (yvdE) from Lactococcus lactis subsp. lactis (strain IL1403) (Streptococcus lactis).